A 237-amino-acid polypeptide reads, in one-letter code: Phosphoribosylaminoimidazole-succinocarboxamide synthase (237 aa).

It belongs to the SAICAR synthetase family.

The catalysed reaction is 5-amino-1-(5-phospho-D-ribosyl)imidazole-4-carboxylate + L-aspartate + ATP = (2S)-2-[5-amino-1-(5-phospho-beta-D-ribosyl)imidazole-4-carboxamido]succinate + ADP + phosphate + 2 H(+). It functions in the pathway purine metabolism; IMP biosynthesis via de novo pathway; 5-amino-1-(5-phospho-D-ribosyl)imidazole-4-carboxamide from 5-amino-1-(5-phospho-D-ribosyl)imidazole-4-carboxylate: step 1/2. The protein is Phosphoribosylaminoimidazole-succinocarboxamide synthase of Listeria monocytogenes serovar 1/2a (strain ATCC BAA-679 / EGD-e).